Here is a 271-residue protein sequence, read N- to C-terminus: Membrane protein insertase YidC 1 (271 aa).

Positions 1–20 (MKKKLKTFSLILLTGSLLVA) are cleaved as a signal peptide. Cysteine 21 carries the N-palmitoyl cysteine lipid modification. Cysteine 21 carries the S-diacylglycerol cysteine lipid modification. The next 4 helical transmembrane spans lie at 45–65 (IQWL…TLII), 124–144 (YASV…FQAL), 163–183 (PDPY…STWL), and 201–221 (VMPF…VLYW).

This sequence belongs to the OXA1/ALB3/YidC family. Type 2 subfamily.

Its subcellular location is the cell membrane. Required for the insertion and/or proper folding and/or complex formation of integral membrane proteins into the membrane. Involved in integration of membrane proteins that insert both dependently and independently of the Sec translocase complex, as well as at least some lipoproteins. In Streptococcus agalactiae serotype III (strain NEM316), this protein is Membrane protein insertase YidC 1.